Reading from the N-terminus, the 862-residue chain is Autotaxin (862 aa).

The signal sequence occupies residues 1-27 (MARQGCFGSYQVISLFTFAIGVNLCLG). Residues 28–35 (FTASRIKR) constitute a propeptide, removed by furin. Asn-53 carries an N-linked (GlcNAc...) asparagine glycan. SMB domains are found at residues 54–97 (TSGS…LKTA) and 98–142 (RGWE…GESH). 10 disulfide bridges follow: Cys-58–Cys-75, Cys-62–Cys-93, Cys-73–Cys-86, Cys-79–Cys-85, Cys-102–Cys-119, Cys-107–Cys-137, Cys-117–Cys-130, Cys-123–Cys-129, Cys-148–Cys-194, and Cys-156–Cys-350. The Cell attachment site signature appears at 126–128 (RGD). A phosphodiesterase domain region spans residues 144-501 (VDDDCEEIRV…PTFKYRTKVP (358 aa)). The Zn(2+) site is built by Asp-171 and Thr-209. Thr-209 serves as the catalytic Nucleophile. 1-(9Z-octadecenoyl)-sn-glycero-3-phosphate is bound by residues Thr-209, Asn-230, and Asp-311. 1-hexadecanoyl-sn-glycero-3-phosphate-binding residues include Thr-209, Asn-230, and Asp-311. Residues Thr-209, Asn-230, and Asp-311 each contribute to the 1-tetradecanoyl-sn-glycerol 3-phosphate site. Zn(2+) is bound by residues Asp-311, His-315, Asp-358, and His-359. 5 disulfides stabilise this stretch: Cys-366–Cys-468, Cys-413–Cys-805, Cys-566–Cys-666, Cys-568–Cys-651, and Cys-774–Cys-784. N-linked (GlcNAc...) asparagine glycosylation occurs at Asn-410. A Zn(2+)-binding site is contributed by His-474. Position 474 (His-474) interacts with 1-(9Z-octadecenoyl)-sn-glycero-3-phosphate. His-474 contacts 1-hexadecanoyl-sn-glycero-3-phosphate. His-474 serves as a coordination point for 1-tetradecanoyl-sn-glycerol 3-phosphate. Asn-524 carries N-linked (GlcNAc...) asparagine glycosylation. Residues 597-862 (LYGRPAVLYR…TYLHTYESEI (266 aa)) are nuclease-like domain. Residues Asp-739, Asn-741, Asn-743, Leu-745, and Asp-747 each contribute to the Ca(2+) site. The N-linked (GlcNAc...) asparagine glycan is linked to Asn-806. Residues 829-850 (IEHLTGLDFYRKTSRSYSEILT) are required for secretion.

It belongs to the nucleotide pyrophosphatase/phosphodiesterase family. The cofactor is Zn(2+). Requires Ca(2+) as cofactor. In terms of processing, N-glycosylation, but not furin-cleavage, plays a critical role on secretion and on lysoPLD activity. Secretion requires simultaneous glycosylation on Asn-53 and Asn-410, while probable glycosylation of Asn-410 has a preferential role on lysoPLD activity. Not O-glycosylated. The interdomain disulfide bond between Cys-413 and Cys-805 is essential for catalytic activity. Expressed in brain and adipose tissue.

It localises to the secreted. It carries out the reaction a 1-O-alkyl-sn-glycero-3-phosphoethanolamine + H2O = a 1-O-alkyl-sn-glycero-3-phosphate + ethanolamine + H(+). The enzyme catalyses a 1-acyl-sn-glycero-3-phosphoethanolamine + H2O = a 1-acyl-sn-glycero-3-phosphate + ethanolamine + H(+). The catalysed reaction is 1-(9Z-octadecenoyl)-sn-glycero-3-phosphoethanolamine + H2O = 1-(9Z-octadecenoyl)-sn-glycero-3-phosphate + ethanolamine + H(+). It catalyses the reaction a 1-O-alkyl-sn-glycero-3-phosphocholine + H2O = a 1-O-alkyl-sn-glycero-3-phosphate + choline + H(+). It carries out the reaction 1-O-(9Z-octadecenyl)-sn-glycero-3-phosphocholine + H2O = 1-O-(9Z-octadecenyl)-sn-glycero-3-phosphate + choline + H(+). The enzyme catalyses 1-O-hexadecyl-sn-glycero-3-phosphocholine + H2O = 1-O-hexadecyl-sn-glycero-3-phosphate + choline + H(+). The catalysed reaction is a 1-O-(1Z-alkenyl)-sn-glycero-3-phosphocholine + H2O = a 1-O-(1Z-alkenyl)-sn-glycero-3-phosphate + choline + H(+). It catalyses the reaction a 1-acyl-sn-glycero-3-phosphocholine + H2O = a 1-acyl-sn-glycero-3-phosphate + choline + H(+). It carries out the reaction 1-dodecanoyl-sn-glycero-3-phosphocholine + H2O = 1-dodecanoyl-sn-glycerol 3-phosphate + choline + H(+). The enzyme catalyses 1-(9Z-octadecenoyl)-sn-glycero-3-phosphocholine + H2O = 1-(9Z-octadecenoyl)-sn-glycero-3-phosphate + choline + H(+). The catalysed reaction is 1-tetradecanoyl-sn-glycero-3-phosphocholine + H2O = 1-tetradecanoyl-sn-glycerol 3-phosphate + choline + H(+). It catalyses the reaction 1-decanoyl-sn-glycero-3-phosphocholine + H2O = 1-decanoyl-sn-glycero-3-phosphate + choline + H(+). It carries out the reaction 1-octadecanoyl-sn-glycero-3-phosphocholine + H2O = 1-octadecanoyl-sn-glycero-3-phosphate + choline + H(+). The enzyme catalyses 1-hexadecanoyl-sn-glycero-3-phosphocholine + H2O = 1-hexadecanoyl-sn-glycero-3-phosphate + choline + H(+). The catalysed reaction is 1-hexanoyl-sn-glycero-3-phosphocholine + H2O = 1-hexanoyl-sn-glycero-3-phosphate + choline + H(+). It catalyses the reaction 1-(9Z,12Z)-octadecadienoyl-sn-glycero-3-phosphocholine + H2O = 1-(9Z,12Z)-octadecadienoyl-sn-glycero-3-phosphate + choline + H(+). It carries out the reaction sphing-4-enine-phosphocholine + H2O = sphing-4-enine 1-phosphate + choline + H(+). The enzyme catalyses 1-(5Z,8Z,11Z,14Z-eicosatetraenoyl)-sn-glycero-3-phosphocholine + H2O = 1-(5Z,8Z,11Z,14Z-eicosatetraenoyl)-sn-glycero-3-phosphate + choline + H(+). The catalysed reaction is a 2-acyl-sn-glycero-3-phosphocholine + H2O = a 2-acyl-sn-glycerol 3-phosphate + choline + H(+). It catalyses the reaction a 1,2-diacyl-sn-glycero-3-phosphocholine + H2O = a 1,2-diacyl-sn-glycero-3-phosphate + choline + H(+). It carries out the reaction 1,2-dioctanoyl-sn-glycero-3-phosphocholine + H2O = 1,2-dioctanoyl-sn-glycero-3-phosphate + choline + H(+). The enzyme catalyses 1,2-didecanoyl-sn-glycero-3-phosphocholine + H2O = 1,2-didecanoyl-sn-glycero-3-phosphate + choline + H(+). The catalysed reaction is a 1-acyl-sn-glycero-3-phospho-L-serine + H2O = a 1-acyl-sn-glycero-3-phosphate + L-serine + H(+). It catalyses the reaction 1-(9Z-octadecenoyl)-sn-glycero-3-phospho-L-serine + H2O = 1-(9Z-octadecenoyl)-sn-glycero-3-phosphate + L-serine + H(+). It carries out the reaction a 2-acyl-sn-glycero-3-phospho-L-serine + H2O = a 2-acyl-sn-glycerol 3-phosphate + L-serine + H(+). Its activity is regulated as follows. Inhibited by EDTA and EGTA. Functionally, secreted lysophospholipase D that hydrolyzes lysophospholipids to produce the signaling molecule lysophosphatidic acid (LPA) in extracellular fluids. Its major substrate is lysophosphatidylcholine. Can also act on sphingosylphosphorylcholine producing sphingosine-1-phosphate, a modulator of cell motility. Can hydrolyze, in vitro, bis-pNPP, to some extent pNP-TMP, and barely ATP. Involved in several motility-related processes such as angiogenesis and neurite outgrowth. Acts as an angiogenic factor by stimulating migration of smooth muscle cells and microtubule formation. Stimulates migration of melanoma cells, probably via a pertussis toxin-sensitive G protein. May have a role in induction of parturition. Possible involvement in cell proliferation and adipose tissue development. Required for LPA production in activated platelets, cleaves the sn-1 lysophospholipids to generate sn-1 lysophosphatidic acids containing predominantly 18:2 and 20:4 fatty acids. Shows a preference for the sn-1 to the sn-2 isomer of 1-O-alkyl-sn-glycero-3-phosphocholine (lyso-PAF). This is Autotaxin from Mus musculus (Mouse).